The sequence spans 271 residues: Phosphoribosylformylglycinamidine synthase subunit PurQ (271 aa).

In terms of domain architecture, Glutamine amidotransferase type-1 spans 7-253; the sequence is KVAVLRMEGT…FGYQVGRREG (247 aa). The active-site Nucleophile is the Cys-104. Active-site residues include His-238 and Glu-240.

As to quaternary structure, part of the FGAM synthase complex composed of 1 PurL, 1 PurQ and 2 PurS subunits.

The protein localises to the cytoplasm. The catalysed reaction is N(2)-formyl-N(1)-(5-phospho-beta-D-ribosyl)glycinamide + L-glutamine + ATP + H2O = 2-formamido-N(1)-(5-O-phospho-beta-D-ribosyl)acetamidine + L-glutamate + ADP + phosphate + H(+). The enzyme catalyses L-glutamine + H2O = L-glutamate + NH4(+). It functions in the pathway purine metabolism; IMP biosynthesis via de novo pathway; 5-amino-1-(5-phospho-D-ribosyl)imidazole from N(2)-formyl-N(1)-(5-phospho-D-ribosyl)glycinamide: step 1/2. In terms of biological role, part of the phosphoribosylformylglycinamidine synthase complex involved in the purines biosynthetic pathway. Catalyzes the ATP-dependent conversion of formylglycinamide ribonucleotide (FGAR) and glutamine to yield formylglycinamidine ribonucleotide (FGAM) and glutamate. The FGAM synthase complex is composed of three subunits. PurQ produces an ammonia molecule by converting glutamine to glutamate. PurL transfers the ammonia molecule to FGAR to form FGAM in an ATP-dependent manner. PurS interacts with PurQ and PurL and is thought to assist in the transfer of the ammonia molecule from PurQ to PurL. The sequence is that of Phosphoribosylformylglycinamidine synthase subunit PurQ from Archaeoglobus fulgidus (strain ATCC 49558 / DSM 4304 / JCM 9628 / NBRC 100126 / VC-16).